Here is a 500-residue protein sequence, read N- to C-terminus: L-arabinose isomerase (500 aa).

Positions 306, 333, 350, and 450 each coordinate Mn(2+).

It belongs to the arabinose isomerase family. In terms of assembly, homohexamer. It depends on Mn(2+) as a cofactor.

It carries out the reaction beta-L-arabinopyranose = L-ribulose. Its pathway is carbohydrate degradation; L-arabinose degradation via L-ribulose; D-xylulose 5-phosphate from L-arabinose (bacterial route): step 1/3. Catalyzes the conversion of L-arabinose to L-ribulose. This Escherichia coli (strain K12) protein is L-arabinose isomerase (araA).